Reading from the N-terminus, the 293-residue chain is Diaminopimelate epimerase (293 aa).

Residues asparagine 17, glutamine 47, and asparagine 67 each contribute to the substrate site. The Proton donor role is filled by cysteine 76. Substrate-binding positions include 77 to 78 (GN), asparagine 164, asparagine 197, and 215 to 216 (ER). The active-site Proton acceptor is the cysteine 224. 225–226 (GS) serves as a coordination point for substrate.

Belongs to the diaminopimelate epimerase family. Homodimer.

It is found in the cytoplasm. The enzyme catalyses (2S,6S)-2,6-diaminopimelate = meso-2,6-diaminopimelate. Its pathway is amino-acid biosynthesis; L-lysine biosynthesis via DAP pathway; DL-2,6-diaminopimelate from LL-2,6-diaminopimelate: step 1/1. In terms of biological role, catalyzes the stereoinversion of LL-2,6-diaminopimelate (L,L-DAP) to meso-diaminopimelate (meso-DAP), a precursor of L-lysine and an essential component of the bacterial peptidoglycan. This Rhodopseudomonas palustris (strain ATCC BAA-98 / CGA009) protein is Diaminopimelate epimerase.